Consider the following 258-residue polypeptide: Acyl-[acyl-carrier-protein]--UDP-N-acetylglucosamine O-acyltransferase (258 aa).

The protein belongs to the transferase hexapeptide repeat family. LpxA subfamily. As to quaternary structure, homotrimer.

The protein localises to the cytoplasm. The catalysed reaction is a (3R)-hydroxyacyl-[ACP] + UDP-N-acetyl-alpha-D-glucosamine = a UDP-3-O-[(3R)-3-hydroxyacyl]-N-acetyl-alpha-D-glucosamine + holo-[ACP]. The protein operates within glycolipid biosynthesis; lipid IV(A) biosynthesis; lipid IV(A) from (3R)-3-hydroxytetradecanoyl-[acyl-carrier-protein] and UDP-N-acetyl-alpha-D-glucosamine: step 1/6. Its function is as follows. Involved in the biosynthesis of lipid A, a phosphorylated glycolipid that anchors the lipopolysaccharide to the outer membrane of the cell. The sequence is that of Acyl-[acyl-carrier-protein]--UDP-N-acetylglucosamine O-acyltransferase from Thiobacillus denitrificans (strain ATCC 25259 / T1).